The following is a 466-amino-acid chain: Proline--tRNA ligase (466 aa).

The protein belongs to the class-II aminoacyl-tRNA synthetase family. ProS type 3 subfamily. Homodimer.

It localises to the cytoplasm. The catalysed reaction is tRNA(Pro) + L-proline + ATP = L-prolyl-tRNA(Pro) + AMP + diphosphate. Catalyzes the attachment of proline to tRNA(Pro) in a two-step reaction: proline is first activated by ATP to form Pro-AMP and then transferred to the acceptor end of tRNA(Pro). The polypeptide is Proline--tRNA ligase (Picrophilus torridus (strain ATCC 700027 / DSM 9790 / JCM 10055 / NBRC 100828 / KAW 2/3)).